Reading from the N-terminus, the 294-residue chain is Cytidine deaminase (294 aa).

2 consecutive CMP/dCMP-type deaminase domains span residues 48 to 168 (DEDA…FGPK) and 186 to 294 (LTGD…VLLA). Residue 89–91 (NME) participates in substrate binding. Residue H102 participates in Zn(2+) binding. Residue E104 is the Proton donor of the active site. Residues C129 and C132 each coordinate Zn(2+).

Belongs to the cytidine and deoxycytidylate deaminase family. As to quaternary structure, homodimer. The cofactor is Zn(2+).

The catalysed reaction is cytidine + H2O + H(+) = uridine + NH4(+). It carries out the reaction 2'-deoxycytidine + H2O + H(+) = 2'-deoxyuridine + NH4(+). Its function is as follows. This enzyme scavenges exogenous and endogenous cytidine and 2'-deoxycytidine for UMP synthesis. This chain is Cytidine deaminase, found in Escherichia coli O7:K1 (strain IAI39 / ExPEC).